The sequence spans 420 residues: Tryptophan synthase beta chain (420 aa).

Lysine 99 bears the N6-(pyridoxal phosphate)lysine mark.

This sequence belongs to the TrpB family. Tetramer of two alpha and two beta chains. It depends on pyridoxal 5'-phosphate as a cofactor.

The catalysed reaction is (1S,2R)-1-C-(indol-3-yl)glycerol 3-phosphate + L-serine = D-glyceraldehyde 3-phosphate + L-tryptophan + H2O. Its pathway is amino-acid biosynthesis; L-tryptophan biosynthesis; L-tryptophan from chorismate: step 5/5. In terms of biological role, the beta subunit is responsible for the synthesis of L-tryptophan from indole and L-serine. This chain is Tryptophan synthase beta chain, found in Helicobacter hepaticus (strain ATCC 51449 / 3B1).